The primary structure comprises 437 residues: tRNA-2-methylthio-N(6)-dimethylallyladenosine synthase (437 aa).

The 118-residue stretch at 3–120 (RKLFIETHGC…LPEMIDAART (118 aa)) folds into the MTTase N-terminal domain. Residues C12, C49, C83, C157, C161, and C164 each contribute to the [4Fe-4S] cluster site. The Radical SAM core domain occupies 143–370 (RVDGPSAYVS…QQRINQQGFE (228 aa)). In terms of domain architecture, TRAM spans 373–437 (RRMVGTTQRI…PHSLRGSLLS (65 aa)).

It belongs to the methylthiotransferase family. MiaB subfamily. In terms of assembly, monomer. Requires [4Fe-4S] cluster as cofactor.

The protein resides in the cytoplasm. The catalysed reaction is N(6)-dimethylallyladenosine(37) in tRNA + (sulfur carrier)-SH + AH2 + 2 S-adenosyl-L-methionine = 2-methylsulfanyl-N(6)-dimethylallyladenosine(37) in tRNA + (sulfur carrier)-H + 5'-deoxyadenosine + L-methionine + A + S-adenosyl-L-homocysteine + 2 H(+). Its function is as follows. Catalyzes the methylthiolation of N6-(dimethylallyl)adenosine (i(6)A), leading to the formation of 2-methylthio-N6-(dimethylallyl)adenosine (ms(2)i(6)A) at position 37 in tRNAs that read codons beginning with uridine. The sequence is that of tRNA-2-methylthio-N(6)-dimethylallyladenosine synthase from Stutzerimonas stutzeri (strain A1501) (Pseudomonas stutzeri).